The sequence spans 64 residues: p7b (64 aa).

Residues 1-12 lie on the Cytoplasmic side of the membrane; the sequence is MECVCVDSSWPQ. A helical; Signal-anchor for type II membrane protein membrane pass occupies residues 13 to 30; sequence WLRNLILGILISSILFIL. Over 31 to 64 the chain is Lumenal; the sequence is TKTQDTVAVYHEPSVYSIDQTQKFQKIDIHNGGK.

Belongs to the gammacarmovirus double gene block protein 2 family.

The protein resides in the host endoplasmic reticulum membrane. Its function is as follows. Required for cell-to-cell movement of virions in the host plant together with p7a. The sequence is that of p7b from Maize chlorotic mottle virus (isolate United States/Kansas/1987) (MCMV).